A 957-amino-acid chain; its full sequence is UvrABC system protein A (957 aa).

33–40 (GLSGSGKS) lines the ATP pocket. The segment at 252–279 (CPQCGFSIPELEPRMFSFNSPFGACPTC) adopts a C4-type zinc-finger fold. 2 consecutive ABC transporter domains span residues 309–587 (WEPI…AKSL) and 607–935 (PNGR…KYLR). 639-646 (GVSGSGKS) is a binding site for ATP. A C4-type zinc finger spans residues 738 to 764 (CEACRGDGIIKIEMHFLPDVYVPCEVC).

The protein belongs to the ABC transporter superfamily. UvrA family. As to quaternary structure, forms a heterotetramer with UvrB during the search for lesions.

Its subcellular location is the cytoplasm. Functionally, the UvrABC repair system catalyzes the recognition and processing of DNA lesions. UvrA is an ATPase and a DNA-binding protein. A damage recognition complex composed of 2 UvrA and 2 UvrB subunits scans DNA for abnormalities. When the presence of a lesion has been verified by UvrB, the UvrA molecules dissociate. The polypeptide is UvrABC system protein A (Halalkalibacterium halodurans (strain ATCC BAA-125 / DSM 18197 / FERM 7344 / JCM 9153 / C-125) (Bacillus halodurans)).